The sequence spans 484 residues: Acetyl-coenzyme A carboxylase carboxyl transferase subunit beta, chloroplastic (484 aa).

In terms of domain architecture, CoA carboxyltransferase N-terminal spans 223 to 484 (LWIQCDNCYG…LHAFFPLNKN (262 aa)). The Zn(2+) site is built by C227, C230, C243, and C246. The C4-type zinc finger occupies 227–246 (CDNCYGLMYKKVKMNVCEQC).

It belongs to the AccD/PCCB family. In terms of assembly, acetyl-CoA carboxylase is a heterohexamer composed of biotin carboxyl carrier protein, biotin carboxylase and 2 subunits each of ACCase subunit alpha and ACCase plastid-coded subunit beta (accD). Zn(2+) serves as cofactor.

It is found in the plastid. The protein localises to the chloroplast stroma. The enzyme catalyses N(6)-carboxybiotinyl-L-lysyl-[protein] + acetyl-CoA = N(6)-biotinyl-L-lysyl-[protein] + malonyl-CoA. It participates in lipid metabolism; malonyl-CoA biosynthesis; malonyl-CoA from acetyl-CoA: step 1/1. In terms of biological role, component of the acetyl coenzyme A carboxylase (ACC) complex. Biotin carboxylase (BC) catalyzes the carboxylation of biotin on its carrier protein (BCCP) and then the CO(2) group is transferred by the transcarboxylase to acetyl-CoA to form malonyl-CoA. The chain is Acetyl-coenzyme A carboxylase carboxyl transferase subunit beta, chloroplastic from Olimarabidopsis pumila (Dwarf rocket).